Consider the following 599-residue polypeptide: Interleukin-18 receptor accessory protein (599 aa).

The N-terminal stretch at M1–G19 is a signal peptide. Topologically, residues F20–R356 are extracellular. N21, N119, and N152 each carry an N-linked (GlcNAc...) asparagine glycan. A disulfide bridge links C46 with C126. 2 Ig-like C2-type domains span residues P149–R235 and P251–K353. Intrachain disulfides connect C155–C180, C175–C221, C180–C221, and C273–C337. The N-linked (GlcNAc...) asparagine glycan is linked to N345. A helical membrane pass occupies residues G357–A377. Residues S378–W599 lie on the Cytoplasmic side of the membrane. The TIR domain occupies K406–M559. E493 is a catalytic residue.

It belongs to the interleukin-1 receptor family. In terms of assembly, forms a ternary complex with IL18 and IL18R1. Within this complex, IL18R1 is involved in ligand-binding and IL18RAP in signaling leading to NF-kappa-B and JNK activation. In terms of processing, N-glycosylated. As to expression, detected in adrenal gland, bone marrow, brain, fetal brain, fetal liver, heart, kidney, lung, liver, peripheral blood leukocytes, placenta, prostate, salivary gland, skeletal muscle, spinal cord, testis, thymus, thyroid, trachea and uterus. Strongly expressed in peripheral blood leukocytes and spleen and, to a lesser extent, in colon. Specifically coexpressed with IL18R1 in T-helper 1 (Th1)cells.

It is found in the cell membrane. The enzyme catalyses NAD(+) + H2O = ADP-D-ribose + nicotinamide + H(+). Functionally, within the IL18 receptor complex, does not mediate IL18-binding, but involved in IL18-dependent signal transduction, leading to NF-kappa-B and JNK activation. May play a role in IL18-mediated IFNG synthesis from T-helper 1 (Th1) cells. The chain is Interleukin-18 receptor accessory protein from Homo sapiens (Human).